Here is a 293-residue protein sequence, read N- to C-terminus: Xyloglucan endotransglucosylase/hydrolase protein 31 (293 aa).

A signal peptide spans 1 to 20 (MALSLIFLALLVLCPSSGHS). The region spanning 29 to 230 (YPSSRVPTSP…YRYQPFVAKY (202 aa)) is the GH16 domain. Glu114 serves as the catalytic Nucleophile. The Proton donor role is filled by Glu118. Residues Glu118, 131–133 (QTN), 141–148 (DRNVIGRE), and 209–210 (DW) each bind xyloglucan. Disulfide bonds link Cys238–Cys246 and Cys280–Cys293. Residue Arg285 participates in xyloglucan binding.

It belongs to the glycosyl hydrolase 16 family. XTH group 3 subfamily. Interacts with XTH17. The formation of an XTH17-XTH31 dimer may be required for XET activity. Contains at least one intrachain disulfide bond essential for its enzymatic activity. As to expression, predominantly expressed in root. Weakly expressed in influorescence stems. Expressed in root tips and elongation zones, stems, young leaves, flowers and siliques. Expressed in root, hypocotyl, and etiolated whole seedlings.

The protein localises to the secreted. Its subcellular location is the cell wall. It is found in the extracellular space. It localises to the apoplast. The protein resides in the cell membrane. The enzyme catalyses breaks a beta-(1-&gt;4) bond in the backbone of a xyloglucan and transfers the xyloglucanyl segment on to O-4 of the non-reducing terminal glucose residue of an acceptor, which can be a xyloglucan or an oligosaccharide of xyloglucan.. It catalyses the reaction xyloglucan + H2O = xyloglucan oligosaccharides.. Its function is as follows. Catalyzes xyloglucan endohydrolysis (XEH) and/or endotransglycosylation (XET). Cleaves and religates xyloglucan polymers, an essential constituent of the primary cell wall, and thereby participates in cell wall construction of growing tissues. Involved in the accumulation of hemicelluloses. Has a high XEH activity and only a slight XET activity in vitro, but the main in planta activity seems to be XET, thus controlling aluminum sensitivity. Acceptor preferences are XXXGol = XXFGol &gt; XXLGol &gt; XLLGol = XLFGol. This chain is Xyloglucan endotransglucosylase/hydrolase protein 31, found in Arabidopsis thaliana (Mouse-ear cress).